The sequence spans 56 residues: Large ribosomal subunit protein bL32B (56 aa).

Residues 1–19 show a composition bias toward basic residues; it reads MAVPKRRMSRSNTRHRRAQ. Residues 1–22 form a disordered region; sequence MAVPKRRMSRSNTRHRRAQWKA.

Belongs to the bacterial ribosomal protein bL32 family.

This chain is Large ribosomal subunit protein bL32B (rpmF2), found in Streptomyces coelicolor (strain ATCC BAA-471 / A3(2) / M145).